The primary structure comprises 418 residues: Lariat debranching enzyme (418 aa).

Cys-8, His-10, Asp-39, and Asn-84 together coordinate a divalent metal cation. The lariat recognition loop stretch occupies residues 124–154; it reads SGIYNERHYRSGHFERPPYNESTIRSVYHVR. Residues His-174, His-226, and His-228 each coordinate a divalent metal cation. Positions 372-418 are disordered; that stretch reads GERTDIPASLAPSDLPTYDSEEIPIDDIDEIEEMEEAKADDHTRDDA. Residues 390–406 show a composition bias toward acidic residues; sequence DSEEIPIDDIDEIEEME. Residues 407–418 show a composition bias toward basic and acidic residues; that stretch reads EAKADDHTRDDA.

It belongs to the lariat debranching enzyme family. Fe(2+) is required as a cofactor. Zn(2+) serves as cofactor. Requires Mn(2+) as cofactor. As to expression, widely expressed. Expressed in roots, stems, cauline and rosette leaves, flower buds and siliques.

It is found in the nucleus. With respect to regulation, active in presence of diverse metals including Fe(2+), Zn(2+), Mn(2+). Binds two metal cations in two adjacent alpha and beta metal-binding pockets. Functionally, cleaves the 2'-5' phosphodiester linkage at the branch point of lariat intron pre-mRNAs after splicing and converts them into linear molecules that are subsequently degraded. It thereby facilitates ribonucleotide turnover. It may also participate in retrovirus replication via an RNA lariat intermediate in cDNA synthesis. Plays en essential role during embryogenesis. This Arabidopsis thaliana (Mouse-ear cress) protein is Lariat debranching enzyme (DBR1).